The primary structure comprises 1438 residues: DNA-directed RNA polymerase subunit beta' (1438 aa).

Zn(2+)-binding residues include Cys-70, Cys-72, Cys-85, and Cys-88. Mg(2+) contacts are provided by Asp-461, Asp-463, and Asp-465. Cys-821, Cys-895, Cys-902, and Cys-905 together coordinate Zn(2+). Positions Asp-1413 to Asp-1427 are enriched in low complexity. Residues Asp-1413–Glu-1438 form a disordered region.

Belongs to the RNA polymerase beta' chain family. In terms of assembly, the RNAP catalytic core consists of 2 alpha, 1 beta, 1 beta' and 1 omega subunit. When a sigma factor is associated with the core the holoenzyme is formed, which can initiate transcription. Mg(2+) is required as a cofactor. Zn(2+) serves as cofactor.

The catalysed reaction is RNA(n) + a ribonucleoside 5'-triphosphate = RNA(n+1) + diphosphate. In terms of biological role, DNA-dependent RNA polymerase catalyzes the transcription of DNA into RNA using the four ribonucleoside triphosphates as substrates. The sequence is that of DNA-directed RNA polymerase subunit beta' from Erythrobacter litoralis (strain HTCC2594).